A 178-amino-acid chain; its full sequence is Large ribosomal subunit protein uL6 (178 aa).

Belongs to the universal ribosomal protein uL6 family. As to quaternary structure, part of the 50S ribosomal subunit.

Its function is as follows. This protein binds to the 23S rRNA, and is important in its secondary structure. It is located near the subunit interface in the base of the L7/L12 stalk, and near the tRNA binding site of the peptidyltransferase center. The polypeptide is Large ribosomal subunit protein uL6 (Streptococcus pneumoniae (strain 70585)).